The chain runs to 363 residues: NAD(P)H-quinone oxidoreductase subunit 1, chloroplastic (363 aa).

8 helical membrane passes run 26-46 (FVWI…GVLV), 96-116 (WLFA…FLVI), 127-147 (ISIG…GLLV), 175-195 (LALC…IEIV), 203-223 (ILGW…ISAL), 253-273 (FGLF…FVTI), 303-323 (GLIA…ASIL), and 343-363 (FLLP…LALL).

Belongs to the complex I subunit 1 family. In terms of assembly, NDH is composed of at least 16 different subunits, 5 of which are encoded in the nucleus.

The protein localises to the plastid. It is found in the chloroplast thylakoid membrane. It catalyses the reaction a plastoquinone + NADH + (n+1) H(+)(in) = a plastoquinol + NAD(+) + n H(+)(out). It carries out the reaction a plastoquinone + NADPH + (n+1) H(+)(in) = a plastoquinol + NADP(+) + n H(+)(out). Its function is as follows. NDH shuttles electrons from NAD(P)H:plastoquinone, via FMN and iron-sulfur (Fe-S) centers, to quinones in the photosynthetic chain and possibly in a chloroplast respiratory chain. The immediate electron acceptor for the enzyme in this species is believed to be plastoquinone. Couples the redox reaction to proton translocation, and thus conserves the redox energy in a proton gradient. This Zygnema circumcarinatum (Green alga) protein is NAD(P)H-quinone oxidoreductase subunit 1, chloroplastic.